We begin with the raw amino-acid sequence, 340 residues long: Annexin A2-A (340 aa).

The segment at A2–L25 is P10 binding site. Annexin repeat units follow at residues F34–K105, T106–K177, E190–Q262, and N266–G337.

It belongs to the annexin family. In terms of assembly, tetramer of 2 light chains (p10 proteins) and 2 heavy chains (p36 proteins).

Its subcellular location is the secreted. It is found in the extracellular space. The protein resides in the extracellular matrix. The protein localises to the basement membrane. Functionally, calcium-regulated membrane-binding protein whose affinity for calcium is greatly enhanced by anionic phospholipids. It binds two calcium ions with high affinity. The protein is Annexin A2-A (anxa2-a) of Xenopus laevis (African clawed frog).